The chain runs to 544 residues: Chaperonin GroEL (544 aa).

Residues 30-33, K51, 87-91, G415, and D495 each bind ATP; these read TLGP and DGTTT.

It belongs to the chaperonin (HSP60) family. As to quaternary structure, forms a cylinder of 14 subunits composed of two heptameric rings stacked back-to-back. Interacts with the co-chaperonin GroES.

It is found in the cytoplasm. It catalyses the reaction ATP + H2O + a folded polypeptide = ADP + phosphate + an unfolded polypeptide.. Functionally, together with its co-chaperonin GroES, plays an essential role in assisting protein folding. The GroEL-GroES system forms a nano-cage that allows encapsulation of the non-native substrate proteins and provides a physical environment optimized to promote and accelerate protein folding. In Neisseria flavescens, this protein is Chaperonin GroEL.